The sequence spans 418 residues: STE20-related kinase adapter protein beta (418 aa).

The 312-residue stretch at 58–369 (YELQVEIGRG…ASSLLSHVFF (312 aa)) folds into the Protein kinase domain. Residues 64 to 72 (IGRGFDNLT) and Lys-89 each bind ATP.

This sequence belongs to the protein kinase superfamily. STE Ser/Thr protein kinase family. STE20 subfamily. Component of a trimeric complex composed of STK11/LKB1, STRAD (STRADA or STRADB) and CAB39/MO25 (CAB39/MO25alpha or CAB39L/MO25beta): the complex tethers STK11/LKB1 in the cytoplasm and stimulates its catalytic activity. Interacts with BIRC4/XIAP. These two proteins are likely to coexist in a complex with TAK1, TRAF6, TAB1 and TAB2. In terms of tissue distribution, highly expressed in heart, skeletal muscle, testis, liver and colon.

The protein localises to the nucleus. It is found in the cytoplasm. In terms of biological role, pseudokinase which, in complex with CAB39/MO25 (CAB39/MO25alpha or CAB39L/MO25beta), binds to and activates STK11/LKB1. Adopts a closed conformation typical of active protein kinases and binds STK11/LKB1 as a pseudosubstrate, promoting conformational change of STK11/LKB1 in an active conformation. This is STE20-related kinase adapter protein beta (STRADB) from Homo sapiens (Human).